The primary structure comprises 747 residues: Rho GTPase-activating protein 24 (747 aa).

2 disordered regions span residues 1 to 20 (MEER…KNTK) and 327 to 475 (FPKD…GTHS). The PH domain maps to 17–123 (KNTKCGWLRK…WVKSIRRVIW (107 aa)). The Rho-GAP domain maps to 133-327 (QKLEDTVRYE…VMISKHDRLF (195 aa)). Polar residues-rich tracts occupy residues 334–346 (QSKP…SNNN) and 355–367 (GQLQ…NTKE). Ser-368, Ser-390, Ser-395, Ser-397, Ser-401, Ser-412, Ser-414, and Ser-436 each carry phosphoserine. Residues 368–380 (SPVRRCSWDKPES) are compositionally biased toward basic and acidic residues. Polar residues predominate over residues 381 to 404 (PQRSSVDNGSPTALSGSKTNSPRN). Residues 431–475 (IVTNGSFSSSNAEGVEKPQTTPNGSLQARRTSSLKSSGTKMGTHS) show a composition bias toward polar residues. Residue Thr-451 is modified to Phosphothreonine. Ser-494 bears the Phosphoserine mark. Positions 581–639 (DFYVGNFEDPVLDGPPQDDLSHPGDYENKSDRRSVGGRSSRATSSSDNSETFVGNTSSN) are disordered. The segment covering 599 to 614 (DLSHPGDYENKSDRRS) has biased composition (basic and acidic residues). Residues 616–629 (GGRSSRATSSSDNS) are compositionally biased toward low complexity. The segment covering 630–639 (ETFVGNTSSN) has biased composition (polar residues). The stretch at 648-728 (SSLKQEMTKQ…KEMEQFFSTF (81 aa)) forms a coiled coil.

In terms of assembly, interacts with FLNA. Phosphorylated by ROCK, leading to activate the RacGAP activity.

It is found in the cytoplasm. The protein resides in the cytoskeleton. The protein localises to the cell junction. Its subcellular location is the adherens junction. It localises to the focal adhesion. It is found in the cell projection. In terms of biological role, rho GTPase-activating protein involved in cell polarity, cell morphology and cytoskeletal organization. Acts as a GTPase activator for the Rac-type GTPase by converting it to an inactive GDP-bound state. Controls actin remodeling by inactivating Rac downstream of Rho leading to suppress leading edge protrusion and promotes cell retraction to achieve cellular polarity. Able to suppress RAC1 and CDC42 activity in vitro. Overexpression induces cell rounding with partial or complete disruption of actin stress fibers and formation of membrane ruffles, lamellipodia, and filopodia. Isoform 2 is a vascular cell-specific GAP involved in modulation of angiogenesis. The chain is Rho GTPase-activating protein 24 (Arhgap24) from Mus musculus (Mouse).